We begin with the raw amino-acid sequence, 309 residues long: Protein FdhE (309 aa).

This sequence belongs to the FdhE family.

It localises to the cytoplasm. In terms of biological role, necessary for formate dehydrogenase activity. The protein is Protein FdhE of Shigella boydii serotype 18 (strain CDC 3083-94 / BS512).